Reading from the N-terminus, the 374-residue chain is RNA binding protein fox-1 homolog 3 (374 aa).

Over residues 1 to 29 (MAQPYPPAQYPPPPQNGIPAEYAPPPPHP) the composition is skewed to pro residues. The segment at 1 to 105 (MAQPYPPAQY…QQPKRLHVSN (105 aa)) is disordered. Residues 49–74 (TPAQTHPEQPGTEASTQPIAGTQTVP) are compositionally biased toward polar residues. One can recognise an RRM domain in the interval 99 to 175 (KRLHVSNIPF…RKIEVNNATA (77 aa)). R223 is modified (asymmetric dimethylarginine; alternate). Residue R223 is modified to Omega-N-methylarginine; alternate. Position 319 is an asymmetric dimethylarginine (R319).

In terms of processing, phosphorylated. Widely expressed in brain, including in cerebral cortex, hippocampus, thalamus, caudate/putamen, cerebellum, as well as in the spinal cord (at protein level). Not expressed in all neuronal cells within a region, in cerebellum, expression is absent in Purkinje cells (at protein level). Expressed in the retina in the ganglion cells and some cells in the inner nuclear layer, but absent from the photoreceptor cells and most cells in the inner nuclear layer (at protein level).

The protein resides in the nucleus. It localises to the cytoplasm. Pre-mRNA alternative splicing regulator. Regulates alternative splicing of RBFOX2 to enhance the production of mRNA species that are targeted for nonsense-mediated decay (NMD). The protein is RNA binding protein fox-1 homolog 3 (Rbfox3) of Mus musculus (Mouse).